The primary structure comprises 147 residues: TRAP-T-associated universal stress protein TeaD (147 aa).

ATP-binding positions include 8–10 (PVD), Val38, 117–122 (GAQGTN), and 131–133 (SVA).

The protein belongs to the universal stress protein A family. As to quaternary structure, homodimer or homotetramer; in equilibrium. The dimer/tetramer ratio is ATP-dependent. ATP stabilizes dimer-dimer complexes, with one ATP molecule bound to each monomer.

It localises to the cytoplasm. ATP-binding protein that negatively regulates activity of the tripartite ATP-independent periplasmic (TRAP) ectoine transport system TeaABC. May regulate uptake according to the ATP status of the cell. The polypeptide is TRAP-T-associated universal stress protein TeaD (teaD) (Halomonas elongata (strain ATCC 33173 / DSM 2581 / NBRC 15536 / NCIMB 2198 / 1H9)).